A 265-amino-acid chain; its full sequence is Tryptophan synthase alpha chain (265 aa).

Residues E48 and D59 each act as proton acceptor in the active site.

This sequence belongs to the TrpA family. Tetramer of two alpha and two beta chains.

The catalysed reaction is (1S,2R)-1-C-(indol-3-yl)glycerol 3-phosphate + L-serine = D-glyceraldehyde 3-phosphate + L-tryptophan + H2O. It functions in the pathway amino-acid biosynthesis; L-tryptophan biosynthesis; L-tryptophan from chorismate: step 5/5. Functionally, the alpha subunit is responsible for the aldol cleavage of indoleglycerol phosphate to indole and glyceraldehyde 3-phosphate. This chain is Tryptophan synthase alpha chain, found in Vesicomyosocius okutanii subsp. Calyptogena okutanii (strain HA).